Consider the following 154-residue polypeptide: Methylglyoxal synthase (154 aa).

Positions Ser6–Asn154 constitute an MGS-like domain. Residues His19, Lys23, Thr45 to Thr48, and Ser65 to Gly66 contribute to the substrate site. The active-site Proton donor/acceptor is Asp71. Substrate is bound at residue His98.

The protein belongs to the methylglyoxal synthase family.

It carries out the reaction dihydroxyacetone phosphate = methylglyoxal + phosphate. In terms of biological role, catalyzes the formation of methylglyoxal from dihydroxyacetone phosphate. The protein is Methylglyoxal synthase of Cellvibrio japonicus (strain Ueda107) (Pseudomonas fluorescens subsp. cellulosa).